Here is a 143-residue protein sequence, read N- to C-terminus: 6,7-dimethyl-8-ribityllumazine synthase (143 aa).

5-amino-6-(D-ribitylamino)uracil is bound by residues Phe13, 45–47, and 69–71; these read TFD and CVI. Residue 74-75 participates in (2S)-2-hydroxy-3-oxobutyl phosphate binding; sequence ET. The active-site Proton donor is the His77. 5-amino-6-(D-ribitylamino)uracil is bound at residue Leu102. (2S)-2-hydroxy-3-oxobutyl phosphate is bound at residue Arg117.

The protein belongs to the DMRL synthase family.

The enzyme catalyses (2S)-2-hydroxy-3-oxobutyl phosphate + 5-amino-6-(D-ribitylamino)uracil = 6,7-dimethyl-8-(1-D-ribityl)lumazine + phosphate + 2 H2O + H(+). It participates in cofactor biosynthesis; riboflavin biosynthesis; riboflavin from 2-hydroxy-3-oxobutyl phosphate and 5-amino-6-(D-ribitylamino)uracil: step 1/2. Catalyzes the formation of 6,7-dimethyl-8-ribityllumazine by condensation of 5-amino-6-(D-ribitylamino)uracil with 3,4-dihydroxy-2-butanone 4-phosphate. This is the penultimate step in the biosynthesis of riboflavin. This is 6,7-dimethyl-8-ribityllumazine synthase from Archaeoglobus fulgidus (strain ATCC 49558 / DSM 4304 / JCM 9628 / NBRC 100126 / VC-16).